The primary structure comprises 252 residues: Cell division protein ZapD (252 aa).

It belongs to the ZapD family. In terms of assembly, interacts with FtsZ.

The protein localises to the cytoplasm. Its function is as follows. Cell division factor that enhances FtsZ-ring assembly. Directly interacts with FtsZ and promotes bundling of FtsZ protofilaments, with a reduction in FtsZ GTPase activity. The protein is Cell division protein ZapD of Cupriavidus metallidurans (strain ATCC 43123 / DSM 2839 / NBRC 102507 / CH34) (Ralstonia metallidurans).